A 340-amino-acid chain; its full sequence is Delta(1)-pyrroline-2-carboxylate reductase 1 (340 aa).

The active-site Charge relay system is Ser-50. His-51 acts as the Proton donor in catalysis. Arg-55 provides a ligand contact to substrate. 123–127 contacts NADP(+); the sequence is HFSAL. Thr-163 is a binding site for substrate. Residue 181–183 coordinates NADP(+); sequence DFA. Residue 189-190 participates in substrate binding; it reads RG. Asp-191 serves as the catalytic Charge relay system. NADP(+)-binding positions include 232-233 and 307-313; these read HK and RLPSQRR.

This sequence belongs to the LDH2/MDH2 oxidoreductase family. In terms of assembly, homodimer.

The enzyme catalyses L-proline + NAD(+) = 1-pyrroline-2-carboxylate + NADH + H(+). It carries out the reaction L-proline + NADP(+) = 1-pyrroline-2-carboxylate + NADPH + H(+). In terms of biological role, catalyzes the reduction of Delta(1)-pyrroline-2-carboxylate (Pyr2C) to L-proline, using NADPH as the electron donor. May be involved in a degradation pathway that converts trans-3-hydroxy-L-proline (t3LHyp) to L-proline. The chain is Delta(1)-pyrroline-2-carboxylate reductase 1 from Burkholderia ambifaria (strain ATCC BAA-244 / DSM 16087 / CCUG 44356 / LMG 19182 / AMMD) (Burkholderia cepacia (strain AMMD)).